A 256-amino-acid chain; its full sequence is Peptidyl-prolyl cis-trans isomerase FKBP19, chloroplastic (256 aa).

Residues 1-29 (MASISSFGCFPQSTALAGTSSTTRCRTTV) constitute a chloroplast transit peptide. The N-terminal 59 residues, 30–88 (AARLADQSDDFAPLRSSGGNCGCVNNSGEFDRRKLLVSSVGLLIGALSYDSKDGDFASA), are a transit peptide targeting the thylakoid. In terms of domain architecture, PPIase FKBP-type spans 135–254 (GDKVVVDWDG…LFDVELLKIV (120 aa)). At S164 the chain carries Phosphoserine.

This sequence belongs to the FKBP-type PPIase family.

It localises to the plastid. Its subcellular location is the chloroplast thylakoid lumen. It catalyses the reaction [protein]-peptidylproline (omega=180) = [protein]-peptidylproline (omega=0). Functionally, PPIases accelerate the folding of proteins. It catalyzes the cis-trans isomerization of proline imidic peptide bonds in oligopeptides. The protein is Peptidyl-prolyl cis-trans isomerase FKBP19, chloroplastic (FKBP19) of Arabidopsis thaliana (Mouse-ear cress).